A 177-amino-acid polypeptide reads, in one-letter code: ATP synthase subunit delta (177 aa).

The protein belongs to the ATPase delta chain family. In terms of assembly, F-type ATPases have 2 components, F(1) - the catalytic core - and F(0) - the membrane proton channel. F(1) has five subunits: alpha(3), beta(3), gamma(1), delta(1), epsilon(1). F(0) has three main subunits: a(1), b(2) and c(10-14). The alpha and beta chains form an alternating ring which encloses part of the gamma chain. F(1) is attached to F(0) by a central stalk formed by the gamma and epsilon chains, while a peripheral stalk is formed by the delta and b chains.

Its subcellular location is the cell inner membrane. Functionally, f(1)F(0) ATP synthase produces ATP from ADP in the presence of a proton or sodium gradient. F-type ATPases consist of two structural domains, F(1) containing the extramembraneous catalytic core and F(0) containing the membrane proton channel, linked together by a central stalk and a peripheral stalk. During catalysis, ATP synthesis in the catalytic domain of F(1) is coupled via a rotary mechanism of the central stalk subunits to proton translocation. This protein is part of the stalk that links CF(0) to CF(1). It either transmits conformational changes from CF(0) to CF(1) or is implicated in proton conduction. The polypeptide is ATP synthase subunit delta (Aeromonas hydrophila subsp. hydrophila (strain ATCC 7966 / DSM 30187 / BCRC 13018 / CCUG 14551 / JCM 1027 / KCTC 2358 / NCIMB 9240 / NCTC 8049)).